We begin with the raw amino-acid sequence, 1437 residues long: Histone-lysine N-methyltransferase NSD3 (1437 aa).

Disordered regions lie at residues 121–157 (PHEI…KLKI) and 181–252 (QASE…PVQP). Over residues 128-139 (PSPPQPPPPPSV) the composition is skewed to pro residues. S150 bears the Phosphoserine mark. Residues 154–157 (KLKI) carry the KIKL motif. Over residues 187-201 (KSKHESRKEKRKKSN) the composition is skewed to basic residues. The segment covering 202 to 248 (KHDSSRSEERKSHKIPKLEPEEQNRPNERVDTVSEKPREEPVLKEEA) has biased composition (basic and acidic residues). Glycyl lysine isopeptide (Lys-Gly) (interchain with G-Cter in SUMO2) cross-links involve residues K218 and K245. Residues 270–333 (VGDLVWSKVG…EKRVREYKGH (64 aa)) form the PWWP 1 domain. Disordered regions lie at residues 344-365 (TKQA…QRER) and 406-465 (AKKS…EPPP). Residue K413 forms a Glycyl lysine isopeptide (Lys-Gly) (interchain with G-Cter in SUMO2) linkage. Positions 425–445 (VLNTQPEQTNAGEVASSLSST) are enriched in polar residues. S457 is modified (phosphoserine). Glycyl lysine isopeptide (Lys-Gly) (interchain with G-Cter in SUMO2) cross-links involve residues K502 and K532. Residues 540 to 696 (QDRLIISTPN…DSSLSRRGTG (157 aa)) form a disordered region. Positions 546-571 (STPNQRNEKPTQSVSSPEATSGSTGS) are enriched in polar residues. Positions 583-595 (TRSESEKSTEVVP) are enriched in basic and acidic residues. A phosphoserine mark is found at S585, S587, and S590. K628 participates in a covalent cross-link: Glycyl lysine isopeptide (Lys-Gly) (interchain with G-Cter in SUMO2). At S655 the chain carries Phosphoserine. The span at 682–692 (DVQSMDSSLSR) shows a compositional bias: polar residues. 3 PHD-type zinc fingers span residues 701 to 748 (DTVC…CKTG), 749 to 805 (QHPC…CSME), and 862 to 955 (VGFC…CKAG). K790 bears the N6-acetyllysine mark. The PWWP 2 domain maps to 960 to 1022 (YKQIVWVKLG…QGRVFPYVEG (63 aa)). Residues 1033–1069 (INKTFKKALEEAAKRFQELKAQRESKEALEIEKNSRK) adopt a coiled-coil conformation. In terms of domain architecture, AWS spans 1093–1143 (SEIPRCNCKPADENPCGLESECLNRMLQYECHPQVCPAGDRCQNQCFTKRL). The region spanning 1145–1262 (PDAEIIKTER…AGMELTFNYN (118 aa)) is the SET domain. K1151 is covalently cross-linked (Glycyl lysine isopeptide (Lys-Gly) (interchain with G-Cter in SUMO2)). A Post-SET domain is found at 1269–1285 (GRTECHCGADNCSGFLG). The segment at 1321–1368 (EDYCFQCGDGGELVMCDKKDCPKAYHLLCLNLTQPPYGKWECPWHQCD) adopts a PHD-type 4; atypical zinc-finger fold.

This sequence belongs to the class V-like SAM-binding methyltransferase superfamily. Histone-lysine methyltransferase family. SET2 subfamily. Interacts with BRD4. Interacts (via KIKL motif) with BRD3 (via NET domain). As to expression, highly expressed in brain, heart and skeletal muscle. Expressed at lower level in liver and lung.

It localises to the nucleus. The protein resides in the chromosome. The enzyme catalyses L-lysyl(4)-[histone H3] + 2 S-adenosyl-L-methionine = N(6),N(6)-dimethyl-L-lysyl(4)-[histone H3] + 2 S-adenosyl-L-homocysteine + 2 H(+). It catalyses the reaction L-lysyl(27)-[histone H3] + 2 S-adenosyl-L-methionine = N(6),N(6)-dimethyl-L-lysyl(27)-[histone H3] + 2 S-adenosyl-L-homocysteine + 2 H(+). Functionally, histone methyltransferase. Preferentially dimethylates 'Lys-4' and 'Lys-27' of histone H3 forming H3K4me2 and H3K27me2. H3 'Lys-4' methylation represents a specific tag for epigenetic transcriptional activation, while 'Lys-27' is a mark for transcriptional repression. The chain is Histone-lysine N-methyltransferase NSD3 from Homo sapiens (Human).